A 637-amino-acid polypeptide reads, in one-letter code: ATP-dependent zinc metalloprotease FtsH (637 aa).

The Cytoplasmic segment spans residues 1 to 7; sequence MNRVFRN. Residues 8-28 traverse the membrane as a helical segment; the sequence is TIFYLLILLVVIGVVSYFQTS. Over 29-109 the chain is Extracellular; that stretch reads NPKTENMSYS…VEPAQETSGW (81 aa). The helical transmembrane segment at 110–130 threads the bilayer; the sequence is VTFLTTIIPFVIIFILFFFLL. Residues 131–637 lie on the Cytoplasmic side of the membrane; sequence NQAQGGGSRV…TEEKKDDTKE (507 aa). Residue 201–208 coordinates ATP; the sequence is GPPGTGKT. His423 contributes to the Zn(2+) binding site. Residue Glu424 is part of the active site. Residues His427 and Asp499 each coordinate Zn(2+). Residues 514–637 form a not necessary for FtsH function region; the sequence is FGMSEKLGPL…TEEKKDDTKE (124 aa).

It in the central section; belongs to the AAA ATPase family. In the C-terminal section; belongs to the peptidase M41 family. Homohexamer. Interacts with FloT at midcell. Interacts with FloA at midcell. Another study shows only minor colocalization with FloA or FloT. The cofactor is Zn(2+).

The protein localises to the cell membrane. The protein resides in the membrane raft. Its function is as follows. Acts as a processive, ATP-dependent zinc metallopeptidase for both cytoplasmic and membrane proteins. Plays a role in the quality control of integral membrane proteins. Functionally, in vitro partially degrades Spo0E, the phosphatase that acts on Spo0A-P. Recognition requires the last 14 residues of Spo0E. Its stabile accumulation requires FlotA and Flot. May degrade EzrA. This Bacillus subtilis (strain 168) protein is ATP-dependent zinc metalloprotease FtsH.